The primary structure comprises 96 residues: Cell division protein FtsB (96 aa).

Residues 1-11 lie on the Cytoplasmic side of the membrane; that stretch reads MDIKSNSFFYI. A helical transmembrane segment spans residues 12-29; that stretch reads FISVVLLLIAILQYDLWF. Topologically, residues 30 to 96 are periplasmic; sequence SNTGFIKYQA…KQGEVFYSVK (67 aa).

This sequence belongs to the FtsB family. As to quaternary structure, part of a complex composed of FtsB, FtsL and FtsQ.

The protein resides in the cell inner membrane. In terms of biological role, essential cell division protein. May link together the upstream cell division proteins, which are predominantly cytoplasmic, with the downstream cell division proteins, which are predominantly periplasmic. This Francisella tularensis subsp. tularensis (strain SCHU S4 / Schu 4) protein is Cell division protein FtsB.